A 287-amino-acid chain; its full sequence is Shikimate dehydrogenase (NADP(+)) (287 aa).

Shikimate-binding positions include 20-22 (SRS) and threonine 67. The active-site Proton acceptor is the lysine 71. Position 84 (glutamate 84) interacts with NADP(+). 2 residues coordinate shikimate: asparagine 93 and aspartate 108. NADP(+)-binding positions include 132–136 (GAGGA), 156–161 (NRTAAR), and methionine 226. Tyrosine 228 provides a ligand contact to shikimate. NADP(+) is bound at residue glycine 250.

It belongs to the shikimate dehydrogenase family. As to quaternary structure, homodimer.

It carries out the reaction shikimate + NADP(+) = 3-dehydroshikimate + NADPH + H(+). It participates in metabolic intermediate biosynthesis; chorismate biosynthesis; chorismate from D-erythrose 4-phosphate and phosphoenolpyruvate: step 4/7. Involved in the biosynthesis of the chorismate, which leads to the biosynthesis of aromatic amino acids. Catalyzes the reversible NADPH linked reduction of 3-dehydroshikimate (DHSA) to yield shikimate (SA). The polypeptide is Shikimate dehydrogenase (NADP(+)) (Bordetella pertussis (strain Tohama I / ATCC BAA-589 / NCTC 13251)).